Consider the following 254-residue polypeptide: MAAAKRIADEPAFVLHSYDWSESSLILEVFCRHQGRVALVAKGAKKPSSNFRPVLLPLQPLWLSYALAADGNADIHTLKGAEWVGGHVMPTGDALLSGLYLNELLLRLLARSDPHAALFDAYTGVVRVLASEHGDALEPVLRSFELLLLRAIGLLPSLAAQTMTLAPLQADTRYTLVPEGGLRAAAAAERAALPGHQWQVLQHALDDAASHQATVRACAPVCAELKPQLRTLLQYHCGSPMLRTRQLMIDLQAL.

This sequence belongs to the RecO family.

Its function is as follows. Involved in DNA repair and RecF pathway recombination. In Verminephrobacter eiseniae (strain EF01-2), this protein is DNA repair protein RecO.